Here is a 207-residue protein sequence, read N- to C-terminus: uncharacterized protein (207 aa).

5 helical membrane-spanning segments follow: residues 28–48, 59–79, 112–132, 140–160, and 165–185; these read IAVL…IVFV, EGFI…FLIV, MFLL…VAGL, FILA…FIGY, and LITQ…LWYV.

The protein localises to the cell membrane. This is an uncharacterized protein from Bacillus subtilis (strain 168).